A 590-amino-acid chain; its full sequence is Negative elongation factor D (590 aa).

A disordered region spans residues 15-43; that stretch reads FGSAAEWGDEADGGQQEDDYGEGEDDAEV. Positions 21–43 are enriched in acidic residues; the sequence is WGDEADGGQQEDDYGEGEDDAEV.

This sequence belongs to the NELF-D family. The NELF complex is composed of NELFA, NELFB, NELFCD and NELFE; NELFA and NELFCD form a stable subcomplex that binds primarily through NELFCD to the N-terminus of NELFB. Binds RNA which may help to stabilize the NELF complex on nucleic acid. In vitro, the NELFA:NELFCD subcomplex binds to ssDNA and ssRNA in a sequence- and structure-dependent manner. Interacts with ARAF1. Interacts with PCF11. Interacts with NELFB. Interacts with KAT8.

The protein localises to the nucleus. In terms of biological role, essential component of the NELF complex, a complex that negatively regulates the elongation of transcription by RNA polymerase II. The NELF complex, which acts via an association with the DSIF complex and causes transcriptional pausing, is counteracted by the P-TEFb kinase complex. The polypeptide is Negative elongation factor D (NELFCD) (Sus scrofa (Pig)).